We begin with the raw amino-acid sequence, 35 residues long: QWPFQQWAPCTGHWDCPGDRCCFAGYCLETTPSCD.

Disulfide bonds link C10–C22, C16–C27, and C21–C34.

As to expression, expressed by the venom duct.

The protein resides in the secreted. The sequence is that of Conotoxin Cl6.16 from Californiconus californicus (California cone).